The following is a 749-amino-acid chain: 5-methyltetrahydropteroyltriglutamate--homocysteine methyltransferase (749 aa).

5-methyltetrahydropteroyltri-L-glutamate-binding positions include arginine 15–lysine 18 and lysine 114. Residues isoleucine 425–serine 427 and glutamate 478 contribute to the L-homocysteine site. Residues isoleucine 425 to serine 427 and glutamate 478 each bind L-methionine. Tryptophan 555 lines the 5-methyltetrahydropteroyltri-L-glutamate pocket. Residue aspartate 593 participates in L-homocysteine binding. Aspartate 593 is an L-methionine binding site. Glutamate 599 serves as a coordination point for 5-methyltetrahydropteroyltri-L-glutamate. Positions 636, 638, and 660 each coordinate Zn(2+). Histidine 689 acts as the Proton donor in catalysis. Residue cysteine 721 coordinates Zn(2+).

It belongs to the vitamin-B12 independent methionine synthase family. The cofactor is Zn(2+).

It carries out the reaction 5-methyltetrahydropteroyltri-L-glutamate + L-homocysteine = tetrahydropteroyltri-L-glutamate + L-methionine. The protein operates within amino-acid biosynthesis; L-methionine biosynthesis via de novo pathway; L-methionine from L-homocysteine (MetE route): step 1/1. Functionally, catalyzes the transfer of a methyl group from 5-methyltetrahydrofolate to homocysteine resulting in methionine formation. The sequence is that of 5-methyltetrahydropteroyltriglutamate--homocysteine methyltransferase from Streptococcus pneumoniae serotype 19F (strain G54).